A 244-amino-acid chain; its full sequence is Triosephosphate isomerase (244 aa).

Residue 9–11 (NWK) coordinates substrate. Histidine 93 serves as the catalytic Electrophile. The active-site Proton acceptor is glutamate 160. Substrate is bound by residues glycine 166 and serine 206.

This sequence belongs to the triosephosphate isomerase family. As to quaternary structure, homodimer.

Its subcellular location is the cytoplasm. The catalysed reaction is D-glyceraldehyde 3-phosphate = dihydroxyacetone phosphate. It functions in the pathway carbohydrate biosynthesis; gluconeogenesis. The protein operates within carbohydrate degradation; glycolysis; D-glyceraldehyde 3-phosphate from glycerone phosphate: step 1/1. Its function is as follows. Involved in the gluconeogenesis. Catalyzes stereospecifically the conversion of dihydroxyacetone phosphate (DHAP) to D-glyceraldehyde-3-phosphate (G3P). The polypeptide is Triosephosphate isomerase (Mycoplasma pneumoniae (strain ATCC 29342 / M129 / Subtype 1) (Mycoplasmoides pneumoniae)).